Consider the following 1203-residue polypeptide: Partitioning defective 3 homolog B (1203 aa).

2 disordered regions span residues 79 to 104 (FDEQEPLQKTESPGGNPADRQSPDAF) and 138 to 162 (RRSSDPAPGPHADAQPSTASLSGQS). Serine 100 is modified (phosphoserine). Polar residues predominate over residues 152–162 (QPSTASLSGQS). The PDZ 1 domain maps to 201-289 (TRAVEISGEG…SPSVILHVLL (89 aa)). Positions 334-374 (TRASSPEGEEPASPQQSKSPRVPRLGRKPSSPSLSPLMGFG) are disordered. Phosphoserine is present on residues serine 346, serine 352, and serine 368. 2 consecutive PDZ domains span residues 383–468 (KIDL…VIAR) and 496–585 (TLEI…GMIQ). 7 positions are modified to phosphoserine: serine 635, serine 710, serine 728, serine 730, serine 746, serine 749, and serine 801. Residues 718 to 732 (GKVQSLADRRSDSPG) show a composition bias toward basic and acidic residues. The segment at 718–743 (GKVQSLADRRSDSPGKDFGPTLGLKK) is disordered. Disordered regions lie at residues 787–927 (KSYD…EKQA), 968–994 (VFRSPSPLRAGPLAYPRDGRPLSPDHL), and 1050–1203 (RPSD…TAAV). A Phosphothreonine modification is found at threonine 810. Positions 827–842 (VENKAKNIKKTKEKEK) are enriched in basic and acidic residues. Positions 843–854 (KKGKGKLKVKEK) are enriched in basic residues. Composition is skewed to basic and acidic residues over residues 855–865 (KLKEEHEDAER), 881–893 (KKDDKVGKAEQKG), 906–927 (ERMKEERERIGAKHQELREKQA), and 984–994 (RDGRPLSPDHL). Residues serine 1088 and serine 1182 each carry the phosphoserine modification.

Belongs to the PAR3 family. Interacts with PARD6B. Interacts with INSC/inscuteable.

The protein localises to the endomembrane system. The protein resides in the cell junction. It is found in the tight junction. Putative adapter protein involved in asymmetrical cell division and cell polarization processes. May play a role in the formation of epithelial tight junctions. This Mus musculus (Mouse) protein is Partitioning defective 3 homolog B (Pard3b).